We begin with the raw amino-acid sequence, 277 residues long: MNLVPALVLLLALAQTVLGATIGHDKVQPFAQPDPVTVSEKAAVKYKPQLQISDSCVSFPAVNAAGEITGGLKGTKGTDGCTEAPLGSQVYGRSTWYQDKWAMMFAWYFPKNFWGGGAKSRHLWANMVLWIDNPALETPKILGASLSRQTLEVPKAVFLSMGEQQKDPYSKVTAIPPMGFVGMQAIQTSRISRFRYTYNYTGGSDISTRVSQGYPDNSAWISLTFAGTDGEYQDLIMWNQLTDQARAALESADFGEDTKVPFNDKNFEAALAQAWPF.

Positions 1–19 are cleaved as a signal peptide; sequence MNLVPALVLLLALAQTVLG. A Hepta-peptide GHRHDWE motif motif is present at residues 119–125; it reads KSRHLWA. N199 carries an N-linked (GlcNAc...) asparagine glycan.

The protein belongs to the Necrosis inducing protein (NPP1) family.

It localises to the secreted. Its function is as follows. Secreted effector that contributes strongly to virulence during infection by P.capsici. Induces cell death in the Solanaceae, including hot pepper. This is NLP effector protein Pc109174 from Phytophthora capsici.